The following is a 654-amino-acid chain: Interferon-induced GTP-binding protein Mx1 (654 aa).

The residue at position 1 (M1) is an N-acetylmethionine. 2 stretches are compositionally biased toward basic and acidic residues: residues M1 to D12 and D23 to S32. The disordered stretch occupies residues M1–K33. One can recognise a Dynamin-type G domain in the interval D62–P335. The segment at G72 to S79 is G1 motif. Residue G72–S79 coordinates GTP. The interval V97 to R99 is G2 motif. The segment at D173–G176 is G3 motif. Residues D173–I177 and T242–D245 each bind GTP. The tract at residues T242–D245 is G4 motif. Residues K274–G277 are G5 motif. Positions L336–E361 are bundle signaling element (BSE). The segment at E361–C528 is middle domain. A stalk region spans residues E362–E624. A disordered region spans residues E544–E563. The interval K549–K552 is critical for lipid-binding. Positions T566–G654 constitute a GED domain.

The protein belongs to the TRAFAC class dynamin-like GTPase superfamily. Dynamin/Fzo/YdjA family. As to quaternary structure, homooligomer. Oligomerizes into multimeric filamentous or ring-like structures by virtue of its stalk domain. Oligomerization is critical for GTPase activity, protein stability, and recognition of viral target structures. Interacts with TRPC1, TRPC3, TRPC4, TRPC5, TRPC6 and TRPC7. Interacts with HSPA5. Interacts with DDX39A and DDX39B. Interacts with TUBB/TUBB5. Post-translationally, ISGylated.

The protein localises to the cytoplasm. It is found in the endoplasmic reticulum membrane. It localises to the perinuclear region. Its function is as follows. Interferon-induced dynamin-like GTPase with antiviral activity. In Ovis aries (Sheep), this protein is Interferon-induced GTP-binding protein Mx1 (MX1).